Consider the following 227-residue polypeptide: Large ribosomal subunit protein bL25 (227 aa).

The tract at residues 1-22 (MAETKTLAAAARHGTGKGAARS) is disordered.

It belongs to the bacterial ribosomal protein bL25 family. CTC subfamily. As to quaternary structure, part of the 50S ribosomal subunit; part of the 5S rRNA/L5/L18/L25 subcomplex. Contacts the 5S rRNA. Binds to the 5S rRNA independently of L5 and L18.

In terms of biological role, this is one of the proteins that binds to the 5S RNA in the ribosome where it forms part of the central protuberance. In Methylocella silvestris (strain DSM 15510 / CIP 108128 / LMG 27833 / NCIMB 13906 / BL2), this protein is Large ribosomal subunit protein bL25.